Here is a 654-residue protein sequence, read N- to C-terminus: Translation factor GUF1, mitochondrial (654 aa).

The tr-type G domain occupies Glu57–Val237. Residues Ala66–Ser73, Asp130–His134, and Asn184–Asp187 each bind GTP.

It belongs to the TRAFAC class translation factor GTPase superfamily. Classic translation factor GTPase family. LepA subfamily.

It is found in the mitochondrion inner membrane. The catalysed reaction is GTP + H2O = GDP + phosphate + H(+). Promotes mitochondrial protein synthesis. May act as a fidelity factor of the translation reaction, by catalyzing a one-codon backward translocation of tRNAs on improperly translocated ribosomes. Binds to mitochondrial ribosomes in a GTP-dependent manner. This is Translation factor GUF1, mitochondrial from Candida albicans (strain WO-1) (Yeast).